The chain runs to 407 residues: Indoleamine 2,3-dioxygenase 1 (407 aa).

His-350 contacts heme b. The segment at 362-388 (SKQKPMGGHKSEEPSNTENRGTGGTDV) is disordered.

Belongs to the indoleamine 2,3-dioxygenase family. In terms of assembly, monomer. It depends on heme b as a cofactor.

The protein localises to the cytoplasm. It localises to the cytosol. The enzyme catalyses D-tryptophan + O2 = N-formyl-D-kynurenine. The catalysed reaction is L-tryptophan + O2 = N-formyl-L-kynurenine. Activity is inhibited by and MTH-trp (methylthiohydantoin-DL-tryptophan), modestly inhibited by L-1MT (1-methyl-L-tryptophan) but not D-1MT (1-methyl-D-tryptophan). Catalyzes the first and rate limiting step of the catabolism of the essential amino acid tryptophan along the kynurenine pathway. Involved in the peripheral immune tolerance, contributing to maintain homeostasis by preventing autoimmunity or immunopathology that would result from uncontrolled and overreacting immune responses. Tryptophan shortage inhibits T lymphocytes division and accumulation of tryptophan catabolites induces T-cell apoptosis and differentiation of regulatory T-cells. Acts as a suppressor of anti-tumor immunity. Limits the growth of intracellular pathogens by depriving tryptophan. Protects the fetus from maternal immune rejection. The chain is Indoleamine 2,3-dioxygenase 1 from Rattus norvegicus (Rat).